We begin with the raw amino-acid sequence, 167 residues long: UPF0114 protein Tola_1474 (167 aa).

Transmembrane regions (helical) follow at residues 15-35, 53-73, 109-129, and 136-156; these read IMAPIYLGLSLALLALGIKFF, LILIILSLIDISLVGGLIVMV, VAASIVAISSIHLLKVFMNTE, and IKWYLLIHITFVMSAFAMGYL.

This sequence belongs to the UPF0114 family.

It localises to the cell membrane. This Tolumonas auensis (strain DSM 9187 / NBRC 110442 / TA 4) protein is UPF0114 protein Tola_1474.